Here is a 374-residue protein sequence, read N- to C-terminus: Erythronate-4-phosphate dehydrogenase (374 aa).

Residues S45 and T67 each coordinate substrate. D147 contributes to the NAD(+) binding site. R208 is an active-site residue. D232 is a binding site for NAD(+). Residue E237 is part of the active site. Residue H254 is the Proton donor of the active site. Residue G257 coordinates NAD(+).

The protein belongs to the D-isomer specific 2-hydroxyacid dehydrogenase family. PdxB subfamily. In terms of assembly, homodimer.

The protein localises to the cytoplasm. It carries out the reaction 4-phospho-D-erythronate + NAD(+) = (R)-3-hydroxy-2-oxo-4-phosphooxybutanoate + NADH + H(+). Its pathway is cofactor biosynthesis; pyridoxine 5'-phosphate biosynthesis; pyridoxine 5'-phosphate from D-erythrose 4-phosphate: step 2/5. Functionally, catalyzes the oxidation of erythronate-4-phosphate to 3-hydroxy-2-oxo-4-phosphonooxybutanoate. This chain is Erythronate-4-phosphate dehydrogenase, found in Pseudoalteromonas atlantica (strain T6c / ATCC BAA-1087).